Reading from the N-terminus, the 73-residue chain is Large ribosomal subunit protein bL31 (73 aa).

It belongs to the bacterial ribosomal protein bL31 family. Type A subfamily. In terms of assembly, part of the 50S ribosomal subunit.

In terms of biological role, binds the 23S rRNA. The protein is Large ribosomal subunit protein bL31 (rpmE) of Jannaschia sp. (strain CCS1).